The sequence spans 63 residues: Large ribosomal subunit protein uL29 (63 aa).

This sequence belongs to the universal ribosomal protein uL29 family.

This chain is Large ribosomal subunit protein uL29, found in Shewanella loihica (strain ATCC BAA-1088 / PV-4).